We begin with the raw amino-acid sequence, 339 residues long: Cathepsin L-like peptidase (339 aa).

Residues 1-16 (MKILILLVAFVAAANA) form the signal peptide. Positions 17–121 (VSLYELVKEE…VTFIEPANVE (105 aa)) are cleaved as a propeptide — activation peptide. An N-linked (GlcNAc...) asparagine glycan is attached at Asn-95. Disulfide bonds link Cys-143–Cys-186, Cys-177–Cys-219, and Cys-278–Cys-328. Residue Cys-146 is part of the active site. Active-site residues include His-285 and Asn-306.

It belongs to the peptidase C1 family. In terms of assembly, dimer of a heavy and a light chain linked by disulfide bonds. Interacts with cystatin; the interaction results in inhibition of cathepsin L-like peptidase activity. Salivary gland. Midgut.

The catalysed reaction is Specificity close to that of papain. As compared to cathepsin B, cathepsin L exhibits higher activity toward protein substrates, but has little activity on Z-Arg-Arg-NHMec, and no peptidyl-dipeptidase activity.. With respect to regulation, more active in the presence of a reducing agent DTT. Its function is as follows. Proteinase exhibiting preference for Leu, Val and Phe residues at the P2 position. The protein is Cathepsin L-like peptidase of Aedes aegypti (Yellowfever mosquito).